We begin with the raw amino-acid sequence, 269 residues long: Ribosomal RNA small subunit methyltransferase J (269 aa).

S-adenosyl-L-methionine is bound by residues 125-126 (ER) and D179.

It belongs to the methyltransferase superfamily. RsmJ family.

It localises to the cytoplasm. The enzyme catalyses guanosine(1516) in 16S rRNA + S-adenosyl-L-methionine = N(2)-methylguanosine(1516) in 16S rRNA + S-adenosyl-L-homocysteine + H(+). Its function is as follows. Specifically methylates the guanosine in position 1516 of 16S rRNA. This is Ribosomal RNA small subunit methyltransferase J from Pseudomonas syringae pv. tomato (strain ATCC BAA-871 / DC3000).